The primary structure comprises 59 residues: UPF0434 protein plu1633 (59 aa).

It belongs to the UPF0434 family.

This is UPF0434 protein plu1633 from Photorhabdus laumondii subsp. laumondii (strain DSM 15139 / CIP 105565 / TT01) (Photorhabdus luminescens subsp. laumondii).